Here is a 661-residue protein sequence, read N- to C-terminus: UvrABC system protein B (661 aa).

In terms of domain architecture, Helicase ATP-binding spans 25 to 414; the sequence is AGLSSKKRSQ…GTVVELIIRP (390 aa). 38-45 lines the ATP pocket; it reads GITGSGKT. The short motif at 91–114 is the Beta-hairpin element; sequence YYDYYQPEAYIARTDTFIEKDSSI. The region spanning 430–592 is the Helicase C-terminal domain; the sequence is QVEDLISEIQ…IIPKTINRAI (163 aa). One can recognise a UVR domain in the interval 621–656; that stretch reads KTHIDKLKKEMLKAASNLEFEQAVKLRDQLKTLEEA.

It belongs to the UvrB family. Forms a heterotetramer with UvrA during the search for lesions. Interacts with UvrC in an incision complex.

It localises to the cytoplasm. In terms of biological role, the UvrABC repair system catalyzes the recognition and processing of DNA lesions. A damage recognition complex composed of 2 UvrA and 2 UvrB subunits scans DNA for abnormalities. Upon binding of the UvrA(2)B(2) complex to a putative damaged site, the DNA wraps around one UvrB monomer. DNA wrap is dependent on ATP binding by UvrB and probably causes local melting of the DNA helix, facilitating insertion of UvrB beta-hairpin between the DNA strands. Then UvrB probes one DNA strand for the presence of a lesion. If a lesion is found the UvrA subunits dissociate and the UvrB-DNA preincision complex is formed. This complex is subsequently bound by UvrC and the second UvrB is released. If no lesion is found, the DNA wraps around the other UvrB subunit that will check the other stand for damage. This Rickettsia conorii (strain ATCC VR-613 / Malish 7) protein is UvrABC system protein B.